The sequence spans 401 residues: ATP phosphoribosyltransferase regulatory subunit (401 aa).

Positions Pro373 to Leu401 are disordered. A compositionally biased stretch (gly residues) spans Asp392–Leu401.

The protein belongs to the class-II aminoacyl-tRNA synthetase family. HisZ subfamily. Heteromultimer composed of HisG and HisZ subunits.

It localises to the cytoplasm. Its pathway is amino-acid biosynthesis; L-histidine biosynthesis; L-histidine from 5-phospho-alpha-D-ribose 1-diphosphate: step 1/9. Functionally, required for the first step of histidine biosynthesis. May allow the feedback regulation of ATP phosphoribosyltransferase activity by histidine. The chain is ATP phosphoribosyltransferase regulatory subunit from Alkalilimnicola ehrlichii (strain ATCC BAA-1101 / DSM 17681 / MLHE-1).